A 391-amino-acid chain; its full sequence is Somatostatin receptor type 1 (391 aa).

Residues 1–50 (MFPNGTAPSPTSSPSSSPGGCGEGVCSRGPGSGAADGMEEPGRNSSQNGT) form a disordered region. The Extracellular segment spans residues 1 to 56 (MFPNGTAPSPTSSPSSSPGGCGEGVCSRGPGSGAADGMEEPGRNSSQNGTLSEGQG). The N-linked (GlcNAc...) asparagine glycan is linked to Asn-4. A compositionally biased stretch (low complexity) spans 8-18 (PSPTSSPSSSP). N-linked (GlcNAc...) asparagine glycans are attached at residues Asn-44 and Asn-48. Residues 57–84 (SAILISFIYSVVCLVGLCGNSMVIYVIL) form a helical membrane-spanning segment. Residues 85 to 94 (RYAKMKTATN) are Cytoplasmic-facing. Residues 95 to 120 (IYILNLAIADELLMLSVPFLVTSTLL) form a helical membrane-spanning segment. Over 121-131 (RHWPFGALLCR) the chain is Extracellular. Cys-130 and Cys-208 are oxidised to a cystine. The helical transmembrane segment at 132–153 (LVLSVDAVNMFTSIYCLTVLSV) threads the bilayer. At 154-175 (DRYVAVVHPIKAARYRRPTVAK) the chain is on the cytoplasmic side. The chain crosses the membrane as a helical span at residues 176-196 (VVNLGVWVLSLLVILPIVVFS). The Extracellular segment spans residues 197-219 (RTAANSDGTVACNMLMPEPAQRW). Residues 220–244 (LVGFVLYTFLMGFLLPVGAICLCYV) traverse the membrane as a helical segment. At 245-270 (LIIAKMRMVALKAGWQQRKRSERKIT) the chain is on the cytoplasmic side. Residues 271–296 (LMVMMVVMVFVICWMPFYVVQLVNVF) traverse the membrane as a helical segment. Residues 297–303 (AEQDDAT) are Extracellular-facing. Residues 304-327 (VSQLSVILGYANSCANPILYGFLS) form a helical membrane-spanning segment. The Cytoplasmic segment spans residues 328–391 (DNFKRSFQRI…GTCASRISTL (64 aa)). A lipid anchor (S-palmitoyl cysteine) is attached at Cys-339.

It belongs to the G-protein coupled receptor 1 family. In terms of tissue distribution, brain, pituitary, islet, jejunum, stomach, heart, spleen.

Its subcellular location is the cell membrane. Receptor for somatostatin with higher affinity for somatostatin-14 than -28. This receptor is coupled to phosphotyrosine phosphatase and Na(+)/H(+) exchanger via pertussis toxin insensitive G proteins. The protein is Somatostatin receptor type 1 (Sstr1) of Rattus norvegicus (Rat).